The following is a 362-amino-acid chain: UDP-N-acetylglucosamine--N-acetylmuramyl-(pentapeptide) pyrophosphoryl-undecaprenol N-acetylglucosamine transferase (362 aa).

Residues 14-16 (TGG), R170, S199, and Q289 each bind UDP-N-acetyl-alpha-D-glucosamine.

This sequence belongs to the glycosyltransferase 28 family. MurG subfamily.

Its subcellular location is the cell inner membrane. The enzyme catalyses di-trans,octa-cis-undecaprenyl diphospho-N-acetyl-alpha-D-muramoyl-L-alanyl-D-glutamyl-meso-2,6-diaminopimeloyl-D-alanyl-D-alanine + UDP-N-acetyl-alpha-D-glucosamine = di-trans,octa-cis-undecaprenyl diphospho-[N-acetyl-alpha-D-glucosaminyl-(1-&gt;4)]-N-acetyl-alpha-D-muramoyl-L-alanyl-D-glutamyl-meso-2,6-diaminopimeloyl-D-alanyl-D-alanine + UDP + H(+). It functions in the pathway cell wall biogenesis; peptidoglycan biosynthesis. Cell wall formation. Catalyzes the transfer of a GlcNAc subunit on undecaprenyl-pyrophosphoryl-MurNAc-pentapeptide (lipid intermediate I) to form undecaprenyl-pyrophosphoryl-MurNAc-(pentapeptide)GlcNAc (lipid intermediate II). The polypeptide is UDP-N-acetylglucosamine--N-acetylmuramyl-(pentapeptide) pyrophosphoryl-undecaprenol N-acetylglucosamine transferase (Borrelia turicatae (strain 91E135)).